The primary structure comprises 212 residues: Kynurenine formamidase (212 aa).

W17 contributes to the substrate binding site. Positions 48, 52, and 54 each coordinate Zn(2+). The active-site Proton donor/acceptor is H58. Zn(2+) contacts are provided by H161 and E173.

This sequence belongs to the Cyclase 1 superfamily. KynB family. Homodimer. Zn(2+) serves as cofactor.

It carries out the reaction N-formyl-L-kynurenine + H2O = L-kynurenine + formate + H(+). It functions in the pathway amino-acid degradation; L-tryptophan degradation via kynurenine pathway; L-kynurenine from L-tryptophan: step 2/2. Functionally, catalyzes the hydrolysis of N-formyl-L-kynurenine to L-kynurenine, the second step in the kynurenine pathway of tryptophan degradation. The protein is Kynurenine formamidase of Salinibacter ruber (strain DSM 13855 / M31).